A 102-amino-acid polypeptide reads, in one-letter code: Large ribosomal subunit protein uL24 (102 aa).

Belongs to the universal ribosomal protein uL24 family. Part of the 50S ribosomal subunit.

Functionally, one of two assembly initiator proteins, it binds directly to the 5'-end of the 23S rRNA, where it nucleates assembly of the 50S subunit. One of the proteins that surrounds the polypeptide exit tunnel on the outside of the subunit. The sequence is that of Large ribosomal subunit protein uL24 from Ralstonia pickettii (strain 12J).